The following is a 268-amino-acid chain: Undecaprenyl-diphosphatase (268 aa).

Transmembrane regions (helical) follow at residues 1–21 (MSLI…FLPI), 39–59 (QGPL…LVYF), 85–105 (ALLV…LVAF), 110–130 (ALRS…PLWL), 144–164 (MSFK…IPGA), 187–207 (FSML…LIEL), 221–241 (DGLI…AVLM), and 247–267 (IGFL…LVFF).

It belongs to the UppP family.

It is found in the cell inner membrane. The catalysed reaction is di-trans,octa-cis-undecaprenyl diphosphate + H2O = di-trans,octa-cis-undecaprenyl phosphate + phosphate + H(+). Functionally, catalyzes the dephosphorylation of undecaprenyl diphosphate (UPP). Confers resistance to bacitracin. This chain is Undecaprenyl-diphosphatase, found in Maricaulis maris (strain MCS10) (Caulobacter maris).